A 601-amino-acid chain; its full sequence is ATP-dependent RNA helicase DDX55 (601 aa).

The Q motif signature appears at 9–37; it reads WESLPVPLHPKVLSVLRELGFPYMTPVQS. Residues 40 to 223 enclose the Helicase ATP-binding domain; it reads IPLFMKNKDV…RAGLRNPVRI (184 aa). 53–60 serves as a coordination point for ATP; the sequence is AVTGSGKT. Positions 171–174 match the DEAD box motif; sequence DEAD. The Helicase C-terminal domain occupies 254–402; sequence KFNQLVHFLR…EMKLQKNTAD (149 aa). The span at 502-514 shows a compositional bias: basic and acidic residues; the sequence is QQRKEKTENDGRR. Disordered regions lie at residues 502–553 and 576–601; these read QQRK…EDME and EKGLLTSGKRSTNKADLEISDLEDDC. Positions 515-538 are enriched in basic residues; sequence KFIKNKAWSKQKAKKEKKKKLTEK. Positions 534–563 are important for nuclear localization; the sequence is KLTEKRKREEGSDVEDEDMEELLNDTRLLK. Phosphoserine is present on residues Ser-545 and Ser-595.

This sequence belongs to the DEAD box helicase family. DDX55/SPB4 subfamily. In terms of assembly, interacts with 28S rRNA. Interacts with double-stranded RNA substrates in vitro; the interaction stimulates ATPase activity.

It is found in the nucleus. It localises to the nucleoplasm. The catalysed reaction is ATP + H2O = ADP + phosphate + H(+). Its function is as follows. Probable ATP-binding RNA helicase. Has ATPase activity and is involved in the maturation of precursor large subunit rRNAs. This Bos taurus (Bovine) protein is ATP-dependent RNA helicase DDX55 (DDX55).